The primary structure comprises 452 residues: Trigger factor (452 aa).

The PPIase FKBP-type domain occupies 171-256; that stretch reads GDRVTLAFKG…ATLIEAPQDA (86 aa).

Belongs to the FKBP-type PPIase family. Tig subfamily.

The protein localises to the cytoplasm. The catalysed reaction is [protein]-peptidylproline (omega=180) = [protein]-peptidylproline (omega=0). Its function is as follows. Involved in protein export. Acts as a chaperone by maintaining the newly synthesized protein in an open conformation. Functions as a peptidyl-prolyl cis-trans isomerase. The protein is Trigger factor of Afipia carboxidovorans (strain ATCC 49405 / DSM 1227 / KCTC 32145 / OM5) (Oligotropha carboxidovorans).